We begin with the raw amino-acid sequence, 445 residues long: Phosphoglucosamine mutase (445 aa).

The Phosphoserine intermediate role is filled by Ser101. Ser101, Asp240, Asp242, and Asp244 together coordinate Mg(2+). Ser101 carries the post-translational modification Phosphoserine.

It belongs to the phosphohexose mutase family. Requires Mg(2+) as cofactor. Post-translationally, activated by phosphorylation.

The enzyme catalyses alpha-D-glucosamine 1-phosphate = D-glucosamine 6-phosphate. Its function is as follows. Catalyzes the conversion of glucosamine-6-phosphate to glucosamine-1-phosphate. The sequence is that of Phosphoglucosamine mutase from Pseudomonas fluorescens (strain Pf0-1).